The primary structure comprises 313 residues: Zinc transporter ZitB (313 aa).

Residues 1–20 are Cytoplasmic-facing; it reads MAHSHSHTSSHLPEDNNARR. A helical transmembrane segment spans residues 21-41; that stretch reads LLYAFGVTAGFMLVEVVGGFL. Residues 42–47 lie on the Periplasmic side of the membrane; it reads SGSLAL. Residues 48–68 traverse the membrane as a helical segment; the sequence is LADAGHMLTDTAALLFALLAV. Topologically, residues 69–89 are cytoplasmic; that stretch reads QFSRRPPTIRHTFGWLRLTTL. A helical membrane pass occupies residues 90–110; the sequence is AAFVNAIALVVITILIVWEAI. Over 111–121 the chain is Periplasmic; that stretch reads ERFRTPRPVEG. The chain crosses the membrane as a helical span at residues 122-142; sequence GMMMAIAVAGLLANILSFWLL. Residues 143-159 lie on the Cytoplasmic side of the membrane; it reads HHGSEEKNLNVRAAALH. Residues 160-180 traverse the membrane as a helical segment; the sequence is VLGDLLGSVGAIIAALIIIWT. Position 181 (Gly181) is a topological domain, periplasmic. The chain crosses the membrane as a helical span at residues 182 to 202; the sequence is WTPADPILSILVSLLVLRSAW. Residues 203–313 lie on the Cytoplasmic side of the membrane; sequence RLLKDSVNEL…GVSGHSHHHH (111 aa).

The protein belongs to the cation diffusion facilitator (CDF) transporter (TC 2.A.4) family. SLC30A subfamily.

It is found in the cell inner membrane. Its function is as follows. Involved in zinc efflux across the cytoplasmic membrane, thus reducing zinc accumulation in the cytoplasm and rendering bacteria more resistant to zinc. It may contribute to zinc homeostasis at low concentrations of zinc. The protein is Zinc transporter ZitB (zitB) of Shigella flexneri.